The following is a 313-amino-acid chain: Ribose-phosphate pyrophosphokinase (313 aa).

Residues 37–39 (DGE) and 96–97 (RQ) each bind ATP. Mg(2+)-binding residues include histidine 131 and aspartate 170. Residue lysine 193 is part of the active site. D-ribose 5-phosphate is bound by residues arginine 195, aspartate 219, and 223 to 227 (DTAGT).

The protein belongs to the ribose-phosphate pyrophosphokinase family. Class I subfamily. As to quaternary structure, homohexamer. Mg(2+) serves as cofactor.

The protein resides in the cytoplasm. The enzyme catalyses D-ribose 5-phosphate + ATP = 5-phospho-alpha-D-ribose 1-diphosphate + AMP + H(+). It functions in the pathway metabolic intermediate biosynthesis; 5-phospho-alpha-D-ribose 1-diphosphate biosynthesis; 5-phospho-alpha-D-ribose 1-diphosphate from D-ribose 5-phosphate (route I): step 1/1. Functionally, involved in the biosynthesis of the central metabolite phospho-alpha-D-ribosyl-1-pyrophosphate (PRPP) via the transfer of pyrophosphoryl group from ATP to 1-hydroxyl of ribose-5-phosphate (Rib-5-P). This chain is Ribose-phosphate pyrophosphokinase, found in Pseudomonas putida (strain ATCC 47054 / DSM 6125 / CFBP 8728 / NCIMB 11950 / KT2440).